Reading from the N-terminus, the 108-residue chain is Protein YcgL (108 aa).

The YcgL domain occupies M12 to L96.

This is Protein YcgL from Escherichia coli O127:H6 (strain E2348/69 / EPEC).